A 208-amino-acid polypeptide reads, in one-letter code: Mediator of RNA polymerase II transcription subunit 21 (208 aa).

The tract at residues 52–122 (TKNSTAPPAP…PDSPRTFASR (71 aa)) is disordered. Positions 63–83 (GAPAGSQASPQQQSAQIPGQQ) are enriched in low complexity. The segment covering 84–104 (QQGGGDAGQTPGAGGGTGGAG) has biased composition (gly residues). Residues 146–195 (GIDSSEAEQERRIKELEKELRSAEEDREQRVRELRKLRKKLENVLGAVEV) are a coiled coil.

This sequence belongs to the Mediator complex subunit 21 family. As to quaternary structure, component of the Mediator complex.

It localises to the nucleus. Functionally, component of the Mediator complex, a coactivator involved in the regulated transcription of nearly all RNA polymerase II-dependent genes. Mediator functions as a bridge to convey information from gene-specific regulatory proteins to the basal RNA polymerase II transcription machinery. Mediator is recruited to promoters by direct interactions with regulatory proteins and serves as a scaffold for the assembly of a functional preinitiation complex with RNA polymerase II and the general transcription factors. The sequence is that of Mediator of RNA polymerase II transcription subunit 21 (srb7) from Aspergillus oryzae (strain ATCC 42149 / RIB 40) (Yellow koji mold).